The chain runs to 317 residues: Metaxin-1 (317 aa).

Residues Lys38, Lys41, and Lys78 each participate in a glycyl lysine isopeptide (Lys-Gly) (interchain with G-Cter in ubiquitin) cross-link. A helical membrane pass occupies residues 164-184 (EELEKELYQEARECLTLLSQR).

It belongs to the metaxin family. Interacts with MTX2/metaxin-2. Associates with the mitochondrial contact site and cristae organizing system (MICOS) complex, composed of at least MICOS10/MIC10, CHCHD3/MIC19, CHCHD6/MIC25, APOOL/MIC27, IMMT/MIC60, APOO/MIC23/MIC26 and QIL1/MIC13. This complex was also known under the names MINOS or MitOS complex. The MICOS complex associates with mitochondrial outer membrane proteins SAMM50, MTX1 and MTX2 (together described as components of the mitochondrial outer membrane sorting assembly machinery (SAM) complex) and DNAJC11, mitochondrial inner membrane protein TMEM11 and with HSPA9. The MICOS and SAM complexes together with DNAJC11 are part of a large protein complex spanning both membranes termed the mitochondrial intermembrane space bridging (MIB) complex. Interacts with ARMC1. Ubiquitinated by PRKN during mitophagy, leading to its degradation and enhancement of mitophagy. Deubiquitinated by USP30.

It is found in the mitochondrion outer membrane. In terms of biological role, involved in transport of proteins into the mitochondrion. Essential for embryonic development. This is Metaxin-1 (MTX1) from Sus scrofa (Pig).